The following is a 141-amino-acid chain: Putative pre-16S rRNA nuclease (141 aa).

Belongs to the YqgF nuclease family.

The protein resides in the cytoplasm. Could be a nuclease involved in processing of the 5'-end of pre-16S rRNA. The polypeptide is Putative pre-16S rRNA nuclease (Dictyoglomus turgidum (strain DSM 6724 / Z-1310)).